Here is a 188-residue protein sequence, read N- to C-terminus: MTEYKLVVVGAGGVGKSALTIQLIQNHFVDEYDPTIEDSYRKQVVIDGETCLLDILDTAGQEEYSAMRDQYMRTGEGFLCVFAINNTKSFEDIHHYREQIKRVKDSEDVPMVLVGNKCDLPSRTVDTKQAQDLARSYGIPFIETSAKTRQGVDDAFYTLVREIRKHKEKMSKDGKKKKKKTKTKCIIM.

Residues 10–18 (GAGGVGKSA), 29–35 (VDEYDPT), 59–60 (AG), and 116–119 (NKCD) contribute to the GTP site. The Effector region signature appears at 32–40 (YDPTIEDSY). Residues 168–188 (EKMSKDGKKKKKKTKTKCIIM) form a disordered region. Cysteine 185 carries the cysteine methyl ester modification. Residue cysteine 185 is the site of S-farnesyl cysteine attachment. Residues 186–188 (IIM) constitute a propeptide, removed in mature form.

The protein belongs to the small GTPase superfamily. Ras family.

The protein resides in the cell membrane. Its subcellular location is the cytoplasm. The enzyme catalyses GTP + H2O = GDP + phosphate + H(+). With respect to regulation, alternates between an inactive form bound to GDP and an active form bound to GTP. Activated by a guanine nucleotide-exchange factor (GEF) and inactivated by a GTPase-activating protein (GAP). Functionally, ras proteins bind GDP/GTP and possess intrinsic GTPase activity. Plays an important role in the regulation of cell proliferation. May play a role in promoting oncogenic events by inducing transcriptional silencing of tumor suppressor genes (TSGs). The polypeptide is GTPase KRas (KRAS) (Meleagris gallopavo (Wild turkey)).